A 208-amino-acid polypeptide reads, in one-letter code: Small ribosomal subunit protein uS3 (208 aa).

The KH type-2 domain occupies 16-85; that stretch reads IDEYFKKELS…KPQIDVKPVE (70 aa).

It belongs to the universal ribosomal protein uS3 family. As to quaternary structure, part of the 30S ribosomal subunit.

Its function is as follows. Binds the lower part of the 30S subunit head. The polypeptide is Small ribosomal subunit protein uS3 (Methanocaldococcus jannaschii (strain ATCC 43067 / DSM 2661 / JAL-1 / JCM 10045 / NBRC 100440) (Methanococcus jannaschii)).